The primary structure comprises 793 residues: Peroxidase-like protein (793 aa).

A signal peptide spans Met1–Cys20.

Belongs to the peroxidase family. In terms of tissue distribution, prismatic layer of shell (at protein level). Expressed primarily in the mantle with highest level in the mantle edge and lower level in the mantle pallium.

Its subcellular location is the secreted. The chain is Peroxidase-like protein from Margaritifera margaritifera (Freshwater pearl mussel).